A 77-amino-acid polypeptide reads, in one-letter code: Translation initiation factor IF-1, chloroplastic (77 aa).

The S1-like domain maps to 1 to 72 (MKKQNLIEME…TKGRITYRLR (72 aa)).

Belongs to the IF-1 family. Component of the 30S ribosomal translation pre-initiation complex which assembles on the 30S ribosome in the order IF-2 and IF-3, IF-1 and N-formylmethionyl-tRNA(fMet); mRNA recruitment can occur at any time during PIC assembly.

It is found in the plastid. The protein localises to the chloroplast. Its function is as follows. One of the essential components for the initiation of protein synthesis. Stabilizes the binding of IF-2 and IF-3 on the 30S subunit to which N-formylmethionyl-tRNA(fMet) subsequently binds. Helps modulate mRNA selection, yielding the 30S pre-initiation complex (PIC). Upon addition of the 50S ribosomal subunit IF-1, IF-2 and IF-3 are released leaving the mature 70S translation initiation complex. This chain is Translation initiation factor IF-1, chloroplastic, found in Zygnema circumcarinatum (Green alga).